The primary structure comprises 206 residues: ATP-dependent Clp protease proteolytic subunit 1 (206 aa).

Serine 106 (nucleophile) is an active-site residue. Histidine 131 is an active-site residue.

The protein belongs to the peptidase S14 family. As to quaternary structure, fourteen ClpP subunits assemble into 2 heptameric rings which stack back to back to give a disk-like structure with a central cavity, resembling the structure of eukaryotic proteasomes.

Its subcellular location is the cytoplasm. The enzyme catalyses Hydrolysis of proteins to small peptides in the presence of ATP and magnesium. alpha-casein is the usual test substrate. In the absence of ATP, only oligopeptides shorter than five residues are hydrolyzed (such as succinyl-Leu-Tyr-|-NHMec, and Leu-Tyr-Leu-|-Tyr-Trp, in which cleavage of the -Tyr-|-Leu- and -Tyr-|-Trp bonds also occurs).. Functionally, cleaves peptides in various proteins in a process that requires ATP hydrolysis. Has a chymotrypsin-like activity. Plays a major role in the degradation of misfolded proteins. The sequence is that of ATP-dependent Clp protease proteolytic subunit 1 from Methylococcus capsulatus (strain ATCC 33009 / NCIMB 11132 / Bath).